We begin with the raw amino-acid sequence, 368 residues long: MCSLPRGFEPQAPEDLAQRSLVELREMLKRQERLLRNEKFICKLPDKGKKIFDSFAKLKAAIAECEEVRRKSELFNPVSLDCKLRQKAIAEVDVGTDKAQNSDPILDTSSLVPGCSSVDNIKSSQTSQNQGLGRPTLEGDEETSEVEYTVNKGPASSNRDRVPPSSEASEHHPRHRVSSQAEDTSSSFDNLFIDRLQRITIADQGEQQSEENASTKNLTGLSSGTEKKPHYMEVLEMRAKNPVPQLRKFKTNVLPFRQNDSSSHCQKSGSPISSEERRRRDKQHLDDITAARLLPLHHMPTQLLSIEESLALQKQQKQNYEEMQAKLAAQKLAERLNIKMRSYNPEGESSGRYREVRDEDDDWSSDEF.

The segment at 29–68 (KRQERLLRNEKFICKLPDKGKKIFDSFAKLKAAIAECEEV) is important for transcription repressor activity. Polar residues-rich tracts occupy residues 116–131 (SSVD…QNQG), 205–224 (GEQQ…LSSG), and 258–273 (QNDS…SPIS). 3 disordered regions span residues 116 to 186 (SSVD…DTSS), 203 to 227 (DQGE…GTEK), and 255 to 282 (PFRQ…RRDK). An interaction with Pol II region spans residues 227–298 (KKPHYMEVLE…TAARLLPLHH (72 aa)). S270 carries the phosphoserine modification. The interval 299 to 314 (MPTQLLSIEESLALQK) is important for transcription repressor activity. Residues 301–335 (TQLLSIEESLALQKQQKQNYEEMQAKLAAQKLAER) adopt a coiled-coil conformation. The tract at residues 315–340 (QQKQNYEEMQAKLAAQKLAERLNIKM) is interaction with Pol II. Residues 339 to 368 (KMRSYNPEGESSGRYREVRDEDDDWSSDEF) are disordered. Over residues 358–368 (DEDDDWSSDEF) the composition is skewed to acidic residues.

The protein belongs to the GRINL1 family. As to quaternary structure, component of the Pol II(G) complex, which contains the RNA polymerase II (Pol II) core complex subunits and POLR2M isoform 1. Pol II(G) appears to be an abundant form of Pol II. Dephosphorylated at Ser-270 by the PNUTS-PP1 complex, promoting RNA polymerase II transcription pause-release. In terms of tissue distribution, detected in adult an fetal brain. Detected in heart, kidney, skeletal muscle, small intestine, lung, prostate and testis.

The protein localises to the nucleus. Appears to be a stable component of the Pol II(G) complex form of RNA polymerase II (Pol II). Pol II synthesizes mRNA precursors and many functional non-coding RNAs and is the central component of the basal RNA polymerase II transcription machinery. May play a role in the Mediator complex-dependent regulation of transcription activation. Acts as a negative regulator of transcriptional activation; this repression is relieved by the Mediator complex, which restores Pol II(G) activator-dependent transcription to a level equivalent to that of Pol II. This chain is DNA-directed RNA polymerase II subunit GRINL1A (POLR2M), found in Homo sapiens (Human).